A 124-amino-acid polypeptide reads, in one-letter code: Small ribosomal subunit protein uS12 (124 aa).

The disordered stretch occupies residues 1–25 (MATINQLVRKPRQASTYKSASPALD).

Belongs to the universal ribosomal protein uS12 family. In terms of assembly, part of the 30S ribosomal subunit. Contacts proteins S8 and S17. May interact with IF1 in the 30S initiation complex.

Its function is as follows. With S4 and S5 plays an important role in translational accuracy. Functionally, interacts with and stabilizes bases of the 16S rRNA that are involved in tRNA selection in the A site and with the mRNA backbone. Located at the interface of the 30S and 50S subunits, it traverses the body of the 30S subunit contacting proteins on the other side and probably holding the rRNA structure together. The combined cluster of proteins S8, S12 and S17 appears to hold together the shoulder and platform of the 30S subunit. This chain is Small ribosomal subunit protein uS12, found in Xylella fastidiosa (strain 9a5c).